A 146-amino-acid polypeptide reads, in one-letter code: D-aminoacyl-tRNA deacylase (146 aa).

The Gly-cisPro motif, important for rejection of L-amino acids signature appears at 137–138 (GP).

It belongs to the DTD family. Homodimer.

It localises to the cytoplasm. It catalyses the reaction glycyl-tRNA(Ala) + H2O = tRNA(Ala) + glycine + H(+). The catalysed reaction is a D-aminoacyl-tRNA + H2O = a tRNA + a D-alpha-amino acid + H(+). Its function is as follows. An aminoacyl-tRNA editing enzyme that deacylates mischarged D-aminoacyl-tRNAs. Also deacylates mischarged glycyl-tRNA(Ala), protecting cells against glycine mischarging by AlaRS. Acts via tRNA-based rather than protein-based catalysis; rejects L-amino acids rather than detecting D-amino acids in the active site. By recycling D-aminoacyl-tRNA to D-amino acids and free tRNA molecules, this enzyme counteracts the toxicity associated with the formation of D-aminoacyl-tRNA entities in vivo and helps enforce protein L-homochirality. This chain is D-aminoacyl-tRNA deacylase, found in Acinetobacter baylyi (strain ATCC 33305 / BD413 / ADP1).